Consider the following 473-residue polypeptide: Lactate utilization protein B 2 (473 aa).

2 consecutive 4Fe-4S ferredoxin-type domains span residues 302–332 and 351–380; these read GSEFRSILQCIRCAACVNVCPVYRHVGGHSY and YDDYKELPYASSLCGACTEACPVKIPLHDL. [4Fe-4S] cluster is bound by residues Cys311, Cys314, Cys317, Cys321, Cys364, Cys367, and Cys371.

This sequence belongs to the LutB/YkgF family.

Its function is as follows. Is involved in L-lactate degradation and allows cells to grow with lactate as the sole carbon source. Has probably a role as an electron transporter during oxidation of L-lactate. The chain is Lactate utilization protein B 2 from Bacillus mycoides (strain KBAB4) (Bacillus weihenstephanensis).